Here is a 2718-residue protein sequence, read N- to C-terminus: Zinc finger protein 40 (2718 aa).

Disordered stretches follow at residues 58 to 182 (HLKK…CISS), 210 to 256 (LSQK…AESQ), and 335 to 373 (GLTS…PMPI). At serine 141 the chain carries Phosphoserine. Residues 142–158 (ELRRWRSEGADPAKFSD) are compositionally biased toward basic and acidic residues. Polar residues-rich tracts occupy residues 164–182 (DSSS…CISS) and 237–256 (KNSS…AESQ). The C2H2-type 1 zinc-finger motif lies at 406-428 (YICEYCNRACAKPSVLLKHIRSH). Position 429 is a phosphothreonine (threonine 429). The C2H2-type 2 zinc-finger motif lies at 434–456 (YPCVTCGFSFKTKSNLYKHKKSH). 6 positions are modified to phosphoserine: serine 476, serine 479, serine 492, serine 495, serine 571, and serine 577. The interval 484-511 (SIHSDVEDSGESEEEGATDERQHDLGAM) is disordered. A compositionally biased stretch (acidic residues) spans 490 to 500 (EDSGESEEEGA). Residues 574–727 (RTDSPKAMDP…TPSALPTGEK (154 aa)) form a disordered region. Basic and acidic residues predominate over residues 576–585 (DSPKAMDPKP). Residues 588–612 (SSAQKQKDLQVTNVQPLSANMSQGG) are compositionally biased toward polar residues. Residues 617-626 (ETNENSHQKG) show a composition bias toward basic and acidic residues. Polar residues-rich tracts occupy residues 644–687 (AQLQ…QTVS) and 698–721 (STEQ…TPSA). Phosphoserine occurs at positions 670 and 681. The CCHC HIVEP-type zinc finger occupies 956–986 (GTMFECETCRNRYRKLENFENHKKFYCSELH). The segment at 1022 to 1062 (WEQTPQIRKRRKMKSVGDDEELQQNESGTSPKSSEGLQFQN) is disordered. Residues serine 1036, serine 1051, serine 1091, serine 1158, serine 1161, and serine 1180 each carry the phosphoserine modification. Residues 1045–1062 (QNESGTSPKSSEGLQFQN) are compositionally biased toward polar residues. A disordered region spans residues 1138 to 1169 (HTNSLSRPNSFDKPEPFERASPVSFQELNRTG). Residues 1160–1169 (VSFQELNRTG) are compositionally biased toward polar residues. Composition is skewed to basic and acidic residues over residues 1202 to 1219 (LRGE…ERHV) and 1246 to 1259 (DLEA…KSEK). Disordered stretches follow at residues 1202-1282 (LRGE…PKKK), 1384-1414 (RSKS…SRVG), and 1523-1548 (SHQS…VLSG). Position 1268 is a phosphothreonine (threonine 1268). Low complexity-rich tracts occupy residues 1394-1406 (TPPQ…ELQP) and 1523-1536 (SHQS…VSTQ). Serine 1735, serine 1740, serine 1749, and serine 1753 each carry phosphoserine. Over residues 1871–1883 (VRSSPAPSENTHI) the composition is skewed to polar residues. Residues 1871-1911 (VRSSPAPSENTHISPLKCTDNNQERKSPGVKNQGDKVNIQE) form a disordered region. Serine 1884 and serine 2033 each carry phosphoserine. 2 C2H2-type zinc fingers span residues 2088-2110 (YICE…IRTH) and 2116-2140 (YHCT…SKAH). Disordered regions lie at residues 2155–2228 (DEQD…PVST), 2265–2303 (SDYN…HQMS), 2327–2381 (SPSS…THLF), and 2572–2718 (PASQ…VIAT). Positions 2164 to 2175 (EKQRFSYERSGY) are enriched in basic and acidic residues. Over residues 2176 to 2198 (DLEESDGPDEDDNENEDDDEDSQ) the composition is skewed to acidic residues. Composition is skewed to polar residues over residues 2199-2226 (AESV…QDPV) and 2288-2300 (TIPS…SPCH). Phosphoserine occurs at positions 2327 and 2599. Polar residues predominate over residues 2573–2608 (ASQSKACETQPKQTSVASANQVSRTESPQGLPTVQR). Basic and acidic residues predominate over residues 2623–2637 (DHARLDGLSKMDTEK). A compositionally biased stretch (polar residues) spans 2651–2663 (TSIQGQPASTSQP). Serine 2669 and serine 2682 each carry phosphoserine.

Interacts with UTP4.

Its subcellular location is the nucleus. The protein resides in the cytoplasm. Its function is as follows. This protein specifically binds to the DNA sequence 5'-GGGACTTTCC-3' which is found in the enhancer elements of numerous viral promoters such as those of SV40, CMV, or HIV-1. In addition, related sequences are found in the enhancer elements of a number of cellular promoters, including those of the class I MHC, interleukin-2 receptor, and interferon-beta genes. It may act in T-cell activation. Involved in activating HIV-1 gene expression. Isoform 2 and isoform 3 also bind to the IPCS (IRF1 and p53 common sequence) DNA sequence in the promoter region of interferon regulatory factor 1 and p53 genes and are involved in transcription regulation of these genes. Isoform 2 does not activate HIV-1 gene expression. Isoform 2 and isoform 3 may be involved in apoptosis. This is Zinc finger protein 40 (HIVEP1) from Homo sapiens (Human).